A 657-amino-acid chain; its full sequence is Endoplasmic reticulum mannosyl-oligosaccharide 1,2-alpha-mannosidase (657 aa).

Residues 1-49 lie on the Cytoplasmic side of the membrane; sequence MYPPPPAPAPHRDFISVTLSLGESYDNSKSRRRRSCWRKWKQLSRLQRN. Residues 50 to 70 form a helical membrane-spanning segment; it reads VILFVLGFLILCGFLYSLQVS. Over 71-657 the chain is Lumenal; sequence DQWKALSGSR…AHPLPIWSPA (587 aa). Ser-101 is subject to Phosphoserine. The tract at residues 118–157 is disordered; the sequence is HLRRGPPHLQIRPPNTVSKDGMQDDAKEREAALGKAQQEE. Basic and acidic residues predominate over residues 138–157; that stretch reads GMQDDAKEREAALGKAQQEE. Glu-288 functions as the Proton donor in the catalytic mechanism. Asp-421 is an active-site residue. A disulfide bridge connects residues Cys-485 and Cys-514. Glu-528 acts as the Proton donor in catalysis. Residue Glu-557 is part of the active site. A Ca(2+)-binding site is contributed by Thr-646.

The protein belongs to the glycosyl hydrolase 47 family. The cofactor is Ca(2+).

It is found in the endoplasmic reticulum membrane. The enzyme catalyses N(4)-(alpha-D-Man-(1-&gt;2)-alpha-D-Man-(1-&gt;2)-alpha-D-Man-(1-&gt;3)-[alpha-D-Man-(1-&gt;2)-alpha-D-Man-(1-&gt;3)-[alpha-D-Man-(1-&gt;2)-alpha-D-Man-(1-&gt;6)]-alpha-D-Man-(1-&gt;6)]-beta-D-Man-(1-&gt;4)-beta-D-GlcNAc-(1-&gt;4)-beta-D-GlcNAc)-L-asparaginyl-[protein] (N-glucan mannose isomer 9A1,2,3B1,2,3) + 4 H2O = N(4)-(alpha-D-Man-(1-&gt;3)-[alpha-D-Man-(1-&gt;3)-[alpha-D-Man-(1-&gt;6)]-alpha-D-Man-(1-&gt;6)]-beta-D-Man-(1-&gt;4)-beta-D-GlcNAc-(1-&gt;4)-beta-D-GlcNAc)-L-asparaginyl-[protein] (N-glucan mannose isomer 5A1,2) + 4 beta-D-mannose. It carries out the reaction N(4)-(alpha-D-Man-(1-&gt;2)-alpha-D-Man-(1-&gt;2)-alpha-D-Man-(1-&gt;3)-[alpha-D-Man-(1-&gt;3)-[alpha-D-Man-(1-&gt;2)-alpha-D-Man-(1-&gt;6)]-alpha-D-Man-(1-&gt;6)]-beta-D-Man-(1-&gt;4)-beta-D-GlcNAc-(1-&gt;4)-beta-D-GlcNAc)-L-asparaginyl-[protein] (N-glucan mannose isomer 8A1,2,3B1,3) + 3 H2O = N(4)-(alpha-D-Man-(1-&gt;3)-[alpha-D-Man-(1-&gt;3)-[alpha-D-Man-(1-&gt;6)]-alpha-D-Man-(1-&gt;6)]-beta-D-Man-(1-&gt;4)-beta-D-GlcNAc-(1-&gt;4)-beta-D-GlcNAc)-L-asparaginyl-[protein] (N-glucan mannose isomer 5A1,2) + 3 beta-D-mannose. It functions in the pathway protein modification; protein glycosylation. In terms of biological role, involved in glycoprotein quality control targeting of misfolded glycoproteins for degradation. It primarily trims a single alpha-1,2-linked mannose residue from Man(9)GlcNAc(2) to produce Man(8)GlcNAc(2), but at high enzyme concentrations, as found in the ER quality control compartment (ERQC), it further trims the carbohydrates to Man(5-6)GlcNAc(2). The chain is Endoplasmic reticulum mannosyl-oligosaccharide 1,2-alpha-mannosidase (Man1b1) from Rattus norvegicus (Rat).